We begin with the raw amino-acid sequence, 130 residues long: Small ribosomal subunit protein uS9 (130 aa).

Belongs to the universal ribosomal protein uS9 family.

The protein is Small ribosomal subunit protein uS9 of Pseudomonas fluorescens (strain ATCC BAA-477 / NRRL B-23932 / Pf-5).